Reading from the N-terminus, the 179-residue chain is Bifunctional protein PyrR (179 aa).

Residues 99–111 (VILVDDVLYTGRT) carry the PRPP-binding motif.

The protein belongs to the purine/pyrimidine phosphoribosyltransferase family. PyrR subfamily. As to quaternary structure, homodimer and homohexamer; in equilibrium.

The enzyme catalyses UMP + diphosphate = 5-phospho-alpha-D-ribose 1-diphosphate + uracil. Its function is as follows. Regulates transcriptional attenuation of the pyrimidine nucleotide (pyr) operon by binding in a uridine-dependent manner to specific sites on pyr mRNA. This disrupts an antiterminator hairpin in the RNA and favors formation of a downstream transcription terminator, leading to a reduced expression of downstream genes. Functionally, also displays a weak uracil phosphoribosyltransferase activity which is not physiologically significant. The polypeptide is Bifunctional protein PyrR (Limosilactobacillus fermentum (strain NBRC 3956 / LMG 18251) (Lactobacillus fermentum)).